The sequence spans 316 residues: Pantothenate kinase (316 aa).

95-102 (GSVAVGKS) lines the ATP pocket.

It belongs to the prokaryotic pantothenate kinase family.

The protein localises to the cytoplasm. It carries out the reaction (R)-pantothenate + ATP = (R)-4'-phosphopantothenate + ADP + H(+). Its pathway is cofactor biosynthesis; coenzyme A biosynthesis; CoA from (R)-pantothenate: step 1/5. The polypeptide is Pantothenate kinase (Shigella boydii serotype 18 (strain CDC 3083-94 / BS512)).